The following is a 774-amino-acid chain: Lon protease 1 (774 aa).

The Lon N-terminal domain occupies 9 to 202 (IPLLPLRGLL…KVIDFINNEK (194 aa)). 354 to 361 (GPPGVGKT) lines the ATP pocket. A Lon proteolytic domain is found at 590–771 (EDQVGVVTGL…DEVLEHALVG (182 aa)). Active-site residues include Ser677 and Lys720.

This sequence belongs to the peptidase S16 family. As to quaternary structure, homohexamer. Organized in a ring with a central cavity. Exists as a mixture of small oligomeric species in solution.

It is found in the cytoplasm. It catalyses the reaction Hydrolysis of proteins in presence of ATP.. In terms of biological role, ATP-dependent serine protease that mediates the selective degradation of mutant and abnormal proteins as well as certain short-lived regulatory proteins. Required for cellular homeostasis and for survival from DNA damage and developmental changes induced by stress. Degrades polypeptides processively to yield small peptide fragments that are 5 to 10 amino acids long. Binds to DNA in a double-stranded, site-specific manner. Has been implicated in preventing sigma(G) activity under non-sporulation conditions. The polypeptide is Lon protease 1 (Bacillus subtilis (strain 168)).